We begin with the raw amino-acid sequence, 251 residues long: B3 domain-containing protein REM7 (251 aa).

2 DNA-binding regions (TF-B3) span residues 11–103 (NSHF…LGPS) and 170–251 (CFVA…SRLN).

It localises to the nucleus. The polypeptide is B3 domain-containing protein REM7 (REM7) (Arabidopsis thaliana (Mouse-ear cress)).